The following is a 1611-amino-acid chain: SH3 domain-containing protein C23A1.17 (1611 aa).

The 65-residue stretch at 3 to 67 (SFPTRVVALY…PKDFTEPAED (65 aa)) folds into the SH3 domain. 4 disordered regions span residues 275 to 648 (THPA…PTSL), 662 to 741 (IDPP…PPGL), 762 to 851 (AVPR…NSLN), and 886 to 1365 (TPST…FSAK). Positions 278 to 296 (AASSTMATESSHQSPSADS) are enriched in polar residues. Over residues 300-312 (ELSKSQRVAKDDD) the composition is skewed to basic and acidic residues. The span at 316–330 (VSNTANSDEPASSSK) shows a compositional bias: polar residues. 2 stretches are compositionally biased toward acidic residues: residues 361-373 (SEQE…DAES) and 387-420 (SEPE…QIDP). A compositionally biased stretch (basic and acidic residues) spans 421–433 (EEAKRIALRERMA). Residues 472–494 (STTNDSSPPKDSSSTSTQPTEQS) are compositionally biased toward low complexity. Residues 576-586 (TQETSEQQVHK) are compositionally biased toward polar residues. Over residues 605–619 (FDKETLASNEAHEAV) the composition is skewed to basic and acidic residues. The span at 637–648 (SSSVVTPSPTSL) shows a compositional bias: low complexity. Polar residues-rich tracts occupy residues 799-808 (SRPSTGSQLR), 886-902 (TPST…SNVA), and 923-940 (ATHQ…QLGS). Pro residues-rich tracts occupy residues 963–974 (PAAPPSIPPPLP), 1022–1053 (PPVP…PPVP), and 1076–1241 (IPAP…PVPA). The span at 1242–1278 (PSSEAPSVSTPRSSVPSPHSNASPSPTSSSMASAAPA) shows a compositional bias: low complexity. Phosphoserine occurs at positions 1258, 1261, and 1266. Residues 1300–1312 (KSSKSGEHHHHHN) show a composition bias toward basic residues. The span at 1317 to 1327 (DSSSTRTSLAH) shows a compositional bias: polar residues. Over residues 1340–1350 (RSSSRASKKPS) the composition is skewed to low complexity. Positions 1351–1362 (IVSTTGPFNESF) are enriched in polar residues. At S1379 the chain carries Phosphoserine. Residue T1380 is modified to Phosphothreonine.

It is found in the cytoplasm. The protein is SH3 domain-containing protein C23A1.17 of Schizosaccharomyces pombe (strain 972 / ATCC 24843) (Fission yeast).